The sequence spans 452 residues: Tripartite motif-containing protein 49C (452 aa).

Residues 15–56 form an RING-type zinc finger; it reads CPLCMNYFIDPVTIDCGHSFCRPCFYLNWQDIPFLVQCSECT. The segment at 88 to 129 adopts a B box-type zinc-finger fold; sequence SEEQMCGTHRETKKIFCEVDRSLLCLLCSSSQEHRYHRHRPI. Zn(2+)-binding residues include cysteine 93, histidine 96, cysteine 115, and histidine 121. Residues 269 to 452 enclose the B30.2/SPRY domain; the sequence is ELSAGPITGL…LRPIFCCIHF (184 aa).

The protein is Tripartite motif-containing protein 49C (TRIM49C) of Homo sapiens (Human).